The primary structure comprises 504 residues: Glycerol kinase (504 aa).

Threonine 12 contacts ADP. Positions 12, 13, and 14 each coordinate ATP. Threonine 12 contacts sn-glycerol 3-phosphate. An ADP-binding site is contributed by arginine 16. Arginine 82, glutamate 83, tyrosine 134, and aspartate 246 together coordinate sn-glycerol 3-phosphate. The glycerol site is built by arginine 82, glutamate 83, tyrosine 134, aspartate 246, and glutamine 247. Residues threonine 268 and glycine 312 each contribute to the ADP site. 4 residues coordinate ATP: threonine 268, glycine 312, glutamine 316, and glycine 413. ADP-binding residues include glycine 413 and asparagine 417.

Belongs to the FGGY kinase family.

It carries out the reaction glycerol + ATP = sn-glycerol 3-phosphate + ADP + H(+). It functions in the pathway polyol metabolism; glycerol degradation via glycerol kinase pathway; sn-glycerol 3-phosphate from glycerol: step 1/1. Inhibited by fructose 1,6-bisphosphate (FBP). Key enzyme in the regulation of glycerol uptake and metabolism. Catalyzes the phosphorylation of glycerol to yield sn-glycerol 3-phosphate. The protein is Glycerol kinase of Renibacterium salmoninarum (strain ATCC 33209 / DSM 20767 / JCM 11484 / NBRC 15589 / NCIMB 2235).